The following is a 229-amino-acid chain: Lipoprotein-releasing system ATP-binding protein LolD (229 aa).

The region spanning 6-226 is the ABC transporter domain; it reads LELKSVDRHY…TLSDGRVVEL (221 aa). 42–49 serves as a coordination point for ATP; that stretch reads APSGTGKS.

This sequence belongs to the ABC transporter superfamily. Lipoprotein translocase (TC 3.A.1.125) family. In terms of assembly, the complex is composed of two ATP-binding proteins (LolD) and two transmembrane proteins (LolC and LolE).

It localises to the cell inner membrane. Functionally, part of the ABC transporter complex LolCDE involved in the translocation of mature outer membrane-directed lipoproteins, from the inner membrane to the periplasmic chaperone, LolA. Responsible for the formation of the LolA-lipoprotein complex in an ATP-dependent manner. The chain is Lipoprotein-releasing system ATP-binding protein LolD from Chelativorans sp. (strain BNC1).